We begin with the raw amino-acid sequence, 302 residues long: Aspartate carbamoyltransferase catalytic subunit (302 aa).

2 residues coordinate carbamoyl phosphate: Arg51 and Thr52. Position 80 (Lys80) interacts with L-aspartate. The carbamoyl phosphate site is built by Arg101, His129, and Gln132. 2 residues coordinate L-aspartate: Arg162 and Arg224. 2 residues coordinate carbamoyl phosphate: Leu263 and Pro264.

The protein belongs to the aspartate/ornithine carbamoyltransferase superfamily. ATCase family. As to quaternary structure, heterododecamer (2C3:3R2) of six catalytic PyrB chains organized as two trimers (C3), and six regulatory PyrI chains organized as three dimers (R2).

The catalysed reaction is carbamoyl phosphate + L-aspartate = N-carbamoyl-L-aspartate + phosphate + H(+). Its pathway is pyrimidine metabolism; UMP biosynthesis via de novo pathway; (S)-dihydroorotate from bicarbonate: step 2/3. Functionally, catalyzes the condensation of carbamoyl phosphate and aspartate to form carbamoyl aspartate and inorganic phosphate, the committed step in the de novo pyrimidine nucleotide biosynthesis pathway. This Azobacteroides pseudotrichonymphae genomovar. CFP2 protein is Aspartate carbamoyltransferase catalytic subunit.